The following is a 282-amino-acid chain: 2-dehydro-3-deoxyphosphooctonate aldolase (282 aa).

This sequence belongs to the KdsA family.

The protein resides in the cytoplasm. The enzyme catalyses D-arabinose 5-phosphate + phosphoenolpyruvate + H2O = 3-deoxy-alpha-D-manno-2-octulosonate-8-phosphate + phosphate. It functions in the pathway carbohydrate biosynthesis; 3-deoxy-D-manno-octulosonate biosynthesis; 3-deoxy-D-manno-octulosonate from D-ribulose 5-phosphate: step 2/3. It participates in bacterial outer membrane biogenesis; lipopolysaccharide biosynthesis. The chain is 2-dehydro-3-deoxyphosphooctonate aldolase from Bartonella bacilliformis (strain ATCC 35685 / KC583 / Herrer 020/F12,63).